The sequence spans 202 residues: Glycolipid transfer protein 1 (202 aa).

Positions 52, 56, 99, and 138 each coordinate a ganglioside GM3 (d18:1(4E)).

It belongs to the GLTP family.

Its function is as follows. May be involved in glycolipids transfer. The polypeptide is Glycolipid transfer protein 1 (Arabidopsis thaliana (Mouse-ear cress)).